The primary structure comprises 227 residues: MSIRFVAADAHWRVAPLPGLSAAQKDWLTRGGSLTAHLRALGAVAVRVTREGVALPWPDEHAALGLAPRAPVWVREVVLAVEGVPFVAAHSVAPLAASAGVWQAMRRLRTRPLAELLYSDSSVARSSLVSRRLTARHPLYRLAACAIESLPPHALVARRSVFERHGAPLMVTECMLPALWAHLATVSGAGGSGDWSAHPRVREHGRPLEHTASRAHPATRASDEQRR.

Substrate is bound by residues arginine 75, leucine 113, and glutamate 173. Residues 192–227 (SGDWSAHPRVREHGRPLEHTASRAHPATRASDEQRR) are disordered. Basic and acidic residues predominate over residues 200-212 (RVREHGRPLEHTA).

This sequence belongs to the UbiC family.

Its subcellular location is the cytoplasm. The enzyme catalyses chorismate = 4-hydroxybenzoate + pyruvate. The protein operates within cofactor biosynthesis; ubiquinone biosynthesis. Removes the pyruvyl group from chorismate, with concomitant aromatization of the ring, to provide 4-hydroxybenzoate (4HB) for the ubiquinone pathway. The protein is Probable chorismate pyruvate-lyase of Paraburkholderia xenovorans (strain LB400).